Consider the following 221-residue polypeptide: Small ribosomal subunit protein uS4c (221 aa).

The disordered stretch occupies residues 26–53 (RKRTDNRCMPGQHRKKRNDSTKKTKNSK). The span at 37 to 53 (QHRKKRNDSTKKTKNSK) shows a compositional bias: basic residues. The 59-residue stretch at 103–161 (MRLDNIVFRLGMAPTIPAARQLVNHGHIVVNNKKVDISSYQCQSQDVISVTKNKTIRTL) folds into the S4 RNA-binding domain.

It belongs to the universal ribosomal protein uS4 family. In terms of assembly, part of the 30S ribosomal subunit. Contacts protein S5. The interaction surface between S4 and S5 is involved in control of translational fidelity.

Its subcellular location is the plastid. It is found in the chloroplast. In terms of biological role, one of the primary rRNA binding proteins, it binds directly to 16S rRNA where it nucleates assembly of the body of the 30S subunit. Its function is as follows. With S5 and S12 plays an important role in translational accuracy. The polypeptide is Small ribosomal subunit protein uS4c (rps4) (Pleurastrum terricola (Filamentous green alga)).